We begin with the raw amino-acid sequence, 861 residues long: DNA mismatch repair protein MutS (861 aa).

618–625 is a binding site for ATP; the sequence is GPNMGGKS.

This sequence belongs to the DNA mismatch repair MutS family.

This protein is involved in the repair of mismatches in DNA. It is possible that it carries out the mismatch recognition step. This protein has a weak ATPase activity. The chain is DNA mismatch repair protein MutS from Shewanella frigidimarina (strain NCIMB 400).